The sequence spans 248 residues: Biosynthetic peptidoglycan transglycosylase (248 aa).

Residues 17–37 (LLIFFFASTILAVIVYRFMPV) traverse the membrane as a helical segment.

It belongs to the glycosyltransferase 51 family.

The protein localises to the cell inner membrane. It catalyses the reaction [GlcNAc-(1-&gt;4)-Mur2Ac(oyl-L-Ala-gamma-D-Glu-L-Lys-D-Ala-D-Ala)](n)-di-trans,octa-cis-undecaprenyl diphosphate + beta-D-GlcNAc-(1-&gt;4)-Mur2Ac(oyl-L-Ala-gamma-D-Glu-L-Lys-D-Ala-D-Ala)-di-trans,octa-cis-undecaprenyl diphosphate = [GlcNAc-(1-&gt;4)-Mur2Ac(oyl-L-Ala-gamma-D-Glu-L-Lys-D-Ala-D-Ala)](n+1)-di-trans,octa-cis-undecaprenyl diphosphate + di-trans,octa-cis-undecaprenyl diphosphate + H(+). It functions in the pathway cell wall biogenesis; peptidoglycan biosynthesis. In terms of biological role, peptidoglycan polymerase that catalyzes glycan chain elongation from lipid-linked precursors. The sequence is that of Biosynthetic peptidoglycan transglycosylase from Bacteroides thetaiotaomicron (strain ATCC 29148 / DSM 2079 / JCM 5827 / CCUG 10774 / NCTC 10582 / VPI-5482 / E50).